Here is a 247-residue protein sequence, read N- to C-terminus: MSIVSLTGIEVLNNPAKFTDPYEFQITFECLEPLKEDLEWKLTYVGSSDSLDHDQELDSILVGPVPVGINSFLFKADAPSPELIPASELVSVTVIILSCSYNDKEFVRVGYYVNNEYDTEELRENPPAKVAIDHVVRNILAEKPRVTRFNIVWDNEEGADEYPPEQPEDEEEEEEEEEEGEEEEEDEDEEDDDDDEDLNGDAVVDLEKEEISTPRDNDEDIEIDIASESEVEEGGVEEEAKVNTPKD.

Residues 151 to 247 (IVWDNEEGAD…EEAKVNTPKD (97 aa)) are disordered. Residues 154-199 (DNEEGADEYPPEQPEDEEEEEEEEEEGEEEEEDEDEEDDDDDEDLN) are compositionally biased toward acidic residues. Residues 165–193 (EQPEDEEEEEEEEEEGEEEEEDEDEEDDD) adopt a coiled-coil conformation. Over residues 205–216 (DLEKEEISTPRD) the composition is skewed to basic and acidic residues. Residues 217-237 (NDEDIEIDIASESEVEEGGVE) are compositionally biased toward acidic residues. The segment covering 238–247 (EEAKVNTPKD) has biased composition (basic and acidic residues).

The protein belongs to the ASF1 family. As to quaternary structure, interacts with histone H3 and histone H4.

It is found in the nucleus. Histone chaperone that facilitates histone deposition and histone exchange and removal during nucleosome assembly and disassembly. The polypeptide is Histone chaperone ASF1 (ASF1) (Candida albicans (strain SC5314 / ATCC MYA-2876) (Yeast)).